The primary structure comprises 92 residues: Transcription factor PRE1 (92 aa).

The bHLH domain maps to 4 to 59 (RRSRQSSSAPRISDNQMIDLVSKLRQILPEIGQRRRSDKASASKVLQETCNYIRNL).

As to quaternary structure, interacts with IBH1 and HFR1. As to expression, expressed in roots, leaves, stems and flowers.

The protein resides in the nucleus. In terms of biological role, atypical and probable non DNA-binding bHLH transcription factor that integrates multiple signaling pathways to regulate cell elongation and plant development. Binds IBH1, forming a pair of antagonistic bHLH transcription factors that function downstream of BZR1 to mediate brassinosteroid regulation of cell elongation. Regulates light responses by binding and inhibiting the activity of the bHLH transcription factor HFR1, a critical regulator of light signaling and shade avoidance. May have a regulatory role in various aspects of gibberellin-dependent growth and development. This chain is Transcription factor PRE1 (PRE1), found in Arabidopsis thaliana (Mouse-ear cress).